A 317-amino-acid polypeptide reads, in one-letter code: uncharacterized protein (317 aa).

Residues 1 to 11 are compositionally biased toward basic and acidic residues; the sequence is MASAGAERRPG. Positions 1–164 are disordered; sequence MASAGAERRP…KAKKRKSLGA (164 aa). Polar residues predominate over residues 19–34; that stretch reads GQGQLTEEPGSAQTSE. Basic and acidic residues-rich tracts occupy residues 47–58 and 71–92; these read HEARGTQSEDQR and EGPK…ERGP. Composition is skewed to basic residues over residues 100-110 and 151-161; these read RPRHGPKRKPV and KQHKKAKKRKS.

This is an uncharacterized protein from Homo sapiens (Human).